The sequence spans 239 residues: MTQQIKYKRVLLKLSGESLMGSDPFGINHDTIVQTVGEIAEVVKMGVQVGIVVGGGNIFRGVSAQAGSMDRATADYMGMMATVMNALALKDAFETLGIKARVQSALSMQQIAETYARPKAIQYLEEGKVVIFAAGTGNPFFTTDTAAALRGAEMNCDVMLKATNVDGVYTADPKKDPSATRYETITFDEALLKNLKVMDATAFALCRERKLNIVVFGIAKEGSLKRVITGEDEGTLVHC.

Residue 13 to 16 participates in ATP binding; it reads KLSG. Gly55 is a binding site for UMP. Residues Gly56 and Arg60 each contribute to the ATP site. Residues Asp75 and 136–143 contribute to the UMP site; that span reads TGNPFFTT. Positions 163, 164, 169, and 172 each coordinate ATP.

Belongs to the UMP kinase family. As to quaternary structure, homohexamer.

It is found in the cytoplasm. The catalysed reaction is UMP + ATP = UDP + ADP. The protein operates within pyrimidine metabolism; CTP biosynthesis via de novo pathway; UDP from UMP (UMPK route): step 1/1. Its activity is regulated as follows. Inhibited by UTP. Functionally, catalyzes the reversible phosphorylation of UMP to UDP. In Neisseria meningitidis serogroup A / serotype 4A (strain DSM 15465 / Z2491), this protein is Uridylate kinase.